We begin with the raw amino-acid sequence, 120 residues long: Large ribosomal subunit protein uL18 (120 aa).

This sequence belongs to the universal ribosomal protein uL18 family. As to quaternary structure, part of the 50S ribosomal subunit; part of the 5S rRNA/L5/L18/L25 subcomplex. Contacts the 5S and 23S rRNAs.

This is one of the proteins that bind and probably mediate the attachment of the 5S RNA into the large ribosomal subunit, where it forms part of the central protuberance. This Methylorubrum populi (strain ATCC BAA-705 / NCIMB 13946 / BJ001) (Methylobacterium populi) protein is Large ribosomal subunit protein uL18.